The following is an 85-amino-acid chain: Small ribosomal subunit protein uS17 (85 aa).

Belongs to the universal ribosomal protein uS17 family. As to quaternary structure, part of the 30S ribosomal subunit.

One of the primary rRNA binding proteins, it binds specifically to the 5'-end of 16S ribosomal RNA. In Geobacter sp. (strain M21), this protein is Small ribosomal subunit protein uS17.